A 196-amino-acid polypeptide reads, in one-letter code: Small ribosomal subunit protein uS4c (196 aa).

An S4 RNA-binding domain is found at 89-149; the sequence is MRLDNILFRL…DKQRSKALIQ (61 aa).

The protein belongs to the universal ribosomal protein uS4 family. In terms of assembly, part of the 30S ribosomal subunit. Contacts protein S5. The interaction surface between S4 and S5 is involved in control of translational fidelity.

The protein localises to the plastid. It localises to the chloroplast. Functionally, one of the primary rRNA binding proteins, it binds directly to 16S rRNA where it nucleates assembly of the body of the 30S subunit. With S5 and S12 plays an important role in translational accuracy. The chain is Small ribosomal subunit protein uS4c (rps4) from Asparagus maritimus (Sea asparagus).